The primary structure comprises 397 residues: Acetate kinase 2 (397 aa).

Asn8 serves as a coordination point for Mg(2+). Lys15 lines the ATP pocket. Arg89 serves as a coordination point for substrate. Asp146 (proton donor/acceptor) is an active-site residue. Residues 206-210 (HLGNG), 281-283 (DLR), and 329-333 (GIGEN) each bind ATP. Glu382 contributes to the Mg(2+) binding site.

It belongs to the acetokinase family. In terms of assembly, homodimer. It depends on Mg(2+) as a cofactor. The cofactor is Mn(2+).

It localises to the cytoplasm. The enzyme catalyses acetate + ATP = acetyl phosphate + ADP. It functions in the pathway metabolic intermediate biosynthesis; acetyl-CoA biosynthesis; acetyl-CoA from acetate: step 1/2. Catalyzes the formation of acetyl phosphate from acetate and ATP. Can also catalyze the reverse reaction. This chain is Acetate kinase 2, found in Listeria monocytogenes serotype 4b (strain F2365).